The sequence spans 114 residues: MNVLLGGFVIFATFVTLCNASCSFMPNERFPGDSTRECTDLKGNKHPINSKWQTDNCEACTCYETEIICCTLIATPVGYDKNKCQRIFKKEECKYIVVEKKNPKKTCPIDQWIL.

The signal sequence occupies residues 1-20 (MNVLLGGFVIFATFVTLCNA). 5 disulfide bridges follow: Cys-22–Cys-70, Cys-38–Cys-62, Cys-57–Cys-93, Cys-60–Cys-69, and Cys-84–Cys-107.

This sequence belongs to the beta-microseminoprotein family. In terms of assembly, homodimer; Interacts with PI16.

The protein resides in the secreted. The sequence is that of Beta-microseminoprotein (MSMB) from Papio anubis (Olive baboon).